The sequence spans 261 residues: MTVVTMKQLLEAGVHFGHQTRRWDPKMAPYIFTQRNGIYIIDLQKTIKMLDDAYNYVKAVAQDGGVFLFVGTKKQAQDAVKEEATRAGQYYVNQRWLGGTLTNWTTIQSRVKRLKELKQMSEDGTFDVLPKKEVALLTKEMEKLERFLGGIEDMPRIPDVMFVVDPKKEKIAVHEANILGIPVVAMVDTNTDPDPIDVVIPANDDAIRAIRLISGAMADAIIEGKQGQDDSEDVEKEMADKAAAEDDEEESIEVVVEKSED.

A disordered region spans residues 223-261 (EGKQGQDDSEDVEKEMADKAAAEDDEEESIEVVVEKSED).

Belongs to the universal ribosomal protein uS2 family.

This chain is Small ribosomal subunit protein uS2, found in Lactobacillus johnsonii (strain CNCM I-12250 / La1 / NCC 533).